The chain runs to 119 residues: ETRYEKFLRQHVDYPRTAAPDTRTYCNQMMQRRGMTSPVCKFTNTFVHASAASITTICGPGGAPAGGNLRDSTASFALTTCRLQGGSQRPPCNYNGGTSTQRIRIACDGGLPVHYDRAI.

Positions 6 and 9 each coordinate substrate. Histidine 11 acts as the Proton acceptor in catalysis. Disulfide bonds link cysteine 26–cysteine 81, cysteine 40–cysteine 92, and cysteine 58–cysteine 107. Substrate contacts are provided by residues 41–45 (KFTNT) and arginine 82. Histidine 114 serves as the catalytic Proton donor.

The protein belongs to the pancreatic ribonuclease family. Monomer. Interacts with and forms tight 1:1 complexes with RNH1. Dimerization of two such complexes may occur. Interaction with RNH1 inhibits this protein.

It localises to the secreted. The enzyme catalyses an [RNA] containing cytidine + H2O = an [RNA]-3'-cytidine-3'-phosphate + a 5'-hydroxy-ribonucleotide-3'-[RNA].. It catalyses the reaction an [RNA] containing uridine + H2O = an [RNA]-3'-uridine-3'-phosphate + a 5'-hydroxy-ribonucleotide-3'-[RNA].. Endonuclease that catalyzes the cleavage of RNA on the 3' side of pyrimidine nucleotides. Acts on single-stranded and double-stranded RNA. In Chelonia mydas (Green sea-turtle), this protein is Ribonuclease.